Here is a 129-residue protein sequence, read N- to C-terminus: Small ribosomal subunit protein uS11 (129 aa).

It belongs to the universal ribosomal protein uS11 family. Part of the 30S ribosomal subunit. Interacts with proteins S7 and S18. Binds to IF-3.

Functionally, located on the platform of the 30S subunit, it bridges several disparate RNA helices of the 16S rRNA. Forms part of the Shine-Dalgarno cleft in the 70S ribosome. The sequence is that of Small ribosomal subunit protein uS11 from Lactobacillus delbrueckii subsp. bulgaricus (strain ATCC 11842 / DSM 20081 / BCRC 10696 / JCM 1002 / NBRC 13953 / NCIMB 11778 / NCTC 12712 / WDCM 00102 / Lb 14).